Here is a 241-residue protein sequence, read N- to C-terminus: Platelet-derived growth factor subunit B (241 aa).

Positions 1–20 are cleaved as a signal peptide; sequence MNRCWALFLSLCCYLRLVSA. A propeptide spans 21–81 (removed in mature form); it reads EGDPIPEELY…ELESLSRGRR (61 aa). N-linked (GlcNAc...) asparagine glycosylation occurs at Asn-63. Intrachain disulfides connect Cys-97-Cys-141, Cys-130-Cys-178, and Cys-134-Cys-180. A propeptide spans 191–241 (removed in mature form); the sequence is TPGSSQEQRAARTPQTRVTIRTVRVRRPPKGKHRKFKHTHDKTALKETLGA. A compositionally biased stretch (basic residues) spans 217-230; it reads RPPKGKHRKFKHTH. Positions 217–241 are disordered; the sequence is RPPKGKHRKFKHTHDKTALKETLGA.

The protein belongs to the PDGF/VEGF growth factor family. In terms of assembly, antiparallel homodimer; disulfide-linked. Antiparallel heterodimer with PDGFA; disulfide-linked. The PDGFB homodimer interacts with PDGFRA and PDGFRB homodimers, and with heterodimers formed by PDGFRA and PDGFRB. The heterodimer composed of PDGFA and PDGFB interacts with PDGFRB homodimers, and with heterodimers formed by PDGFRA and PDGFRB. Interacts with XLKD1. Interacts with LRP1. Interacts with SORL1 (via the N-terminal ectodomain). Interacts with CD82; this interaction inhibits PDGFB-mediated signaling pathway.

It localises to the secreted. Its function is as follows. Growth factor that plays an essential role in the regulation of embryonic development, cell proliferation, cell migration, survival and chemotaxis. Potent mitogen for cells of mesenchymal origin. Required for normal proliferation and recruitment of pericytes and vascular smooth muscle cells in the central nervous system, skin, lung, heart and placenta. Required for normal blood vessel development, and for normal development of kidney glomeruli. Plays an important role in wound healing. Signaling is modulated by the formation of heterodimers with PDGFA. The sequence is that of Platelet-derived growth factor subunit B (PDGFB) from Ovis aries (Sheep).